Consider the following 31-residue polypeptide: Photosystem II reaction center protein T (31 aa).

The chain crosses the membrane as a helical span at residues 3 to 23; it reads ALVYTFLLVTTLGILFFSIIF.

This sequence belongs to the PsbT family. PSII is composed of 1 copy each of membrane proteins PsbA, PsbB, PsbC, PsbD, PsbE, PsbF, PsbH, PsbI, PsbJ, PsbK, PsbL, PsbM, PsbT, PsbX, PsbY, PsbZ, Psb30/Ycf12, at least 3 peripheral proteins of the oxygen-evolving complex and a large number of cofactors. It forms dimeric complexes.

It is found in the plastid. The protein resides in the cyanelle thylakoid membrane. Functionally, found at the monomer-monomer interface of the photosystem II (PS II) dimer, plays a role in assembly and dimerization of PSII. PSII is a light-driven water plastoquinone oxidoreductase, using light energy to abstract electrons from H(2)O, generating a proton gradient subsequently used for ATP formation. This Cyanophora paradoxa protein is Photosystem II reaction center protein T.